Here is a 165-residue protein sequence, read N- to C-terminus: Lipoprotein signal peptidase (165 aa).

A run of 3 helical transmembrane segments spans residues 12-32, 70-90, and 102-122; these read WLWLVVVVLIVDLGSKALILQ, WFFAGIAIGICVLLVVMMYRA, and ALIIGGALGNLFDRLWHGFVV. Active-site residues include Asp123 and Asp141. Residues 137–157 form a helical membrane-spanning segment; it reads FNLADTAICIGAALVVLEGFL.

The protein belongs to the peptidase A8 family.

The protein localises to the cell inner membrane. It catalyses the reaction Release of signal peptides from bacterial membrane prolipoproteins. Hydrolyzes -Xaa-Yaa-Zaa-|-(S,diacylglyceryl)Cys-, in which Xaa is hydrophobic (preferably Leu), and Yaa (Ala or Ser) and Zaa (Gly or Ala) have small, neutral side chains.. It participates in protein modification; lipoprotein biosynthesis (signal peptide cleavage). This protein specifically catalyzes the removal of signal peptides from prolipoproteins. This is Lipoprotein signal peptidase from Cronobacter sakazakii (strain ATCC BAA-894) (Enterobacter sakazakii).